A 218-amino-acid chain; its full sequence is 3,4-dihydroxy-2-butanone 4-phosphate synthase (218 aa).

Residues 38–39 (RE), Asp43, 151–155 (RRGHT), and Glu175 each bind D-ribulose 5-phosphate. Glu39 provides a ligand contact to Mg(2+). His154 provides a ligand contact to Mg(2+).

This sequence belongs to the DHBP synthase family. In terms of assembly, homodimer. The cofactor is Mg(2+). Mn(2+) serves as cofactor.

The catalysed reaction is D-ribulose 5-phosphate = (2S)-2-hydroxy-3-oxobutyl phosphate + formate + H(+). The protein operates within cofactor biosynthesis; riboflavin biosynthesis; 2-hydroxy-3-oxobutyl phosphate from D-ribulose 5-phosphate: step 1/1. Catalyzes the conversion of D-ribulose 5-phosphate to formate and 3,4-dihydroxy-2-butanone 4-phosphate. The protein is 3,4-dihydroxy-2-butanone 4-phosphate synthase of Vibrio cholerae serotype O1 (strain M66-2).